The primary structure comprises 911 residues: Eukaryotic translation initiation factor 3 subunit C (911 aa).

2 disordered regions span residues 1–38 (MSRF…DDEE) and 155–181 (SRFR…GEAA). A compositionally biased stretch (acidic residues) spans 11 to 20 (SESESSEEEV). The segment covering 23–32 (PNFNKASAFQ) has biased composition (polar residues). Phosphoserine is present on residues Ser34, Ser165, Ser175, and Ser184. Residues 162 to 171 (DQESEAEDEE) show a composition bias toward acidic residues. Positions 196-208 (APKIAKSAPAKSV) are enriched in low complexity. Positions 196-284 (APKIAKSAPA…KRAEDDEDGE (89 aa)) are disordered. Positions 210–236 (ADDEDSDDSIDWDSDSESETESSEDEN) are enriched in acidic residues. A compositionally biased stretch (basic and acidic residues) spans 241–271 (MRERFLKRSTEKGEDKGDDDKRKDKRKEQKL). Residues 642–818 (FHMHINLELL…ETVVMHRSEP (177 aa)) enclose the PCI domain. The disordered stretch occupies residues 851–911 (FQRGNMGNRG…QQQVQTIDEE (61 aa)). The span at 885–896 (QRNRNQRGHHKN) shows a compositional bias: basic residues. The span at 897–911 (QQQQQQQQVQTIDEE) shows a compositional bias: low complexity.

Belongs to the eIF-3 subunit C family. As to quaternary structure, component of the eukaryotic translation initiation factor 3 (eIF-3) complex. The eIF-3 complex interacts with pix.

The protein localises to the cytoplasm. Its function is as follows. Component of the eukaryotic translation initiation factor 3 (eIF-3) complex, which is involved in protein synthesis of a specialized repertoire of mRNAs and, together with other initiation factors, stimulates binding of mRNA and methionyl-tRNAi to the 40S ribosome. The eIF-3 complex specifically targets and initiates translation of a subset of mRNAs involved in cell proliferation. This is Eukaryotic translation initiation factor 3 subunit C from Drosophila pseudoobscura pseudoobscura (Fruit fly).